The primary structure comprises 104 residues: Large ribosomal subunit protein uL24 (104 aa).

It belongs to the universal ribosomal protein uL24 family. Part of the 50S ribosomal subunit.

Its function is as follows. One of two assembly initiator proteins, it binds directly to the 5'-end of the 23S rRNA, where it nucleates assembly of the 50S subunit. One of the proteins that surrounds the polypeptide exit tunnel on the outside of the subunit. The sequence is that of Large ribosomal subunit protein uL24 from Bartonella bacilliformis (strain ATCC 35685 / KC583 / Herrer 020/F12,63).